Here is a 604-residue protein sequence, read N- to C-terminus: Elongation factor 4 (604 aa).

The region spanning 7-189 (SKIRNFCIIA…SIVHLVPPPS (183 aa)) is the tr-type G domain. GTP contacts are provided by residues 19-24 (DHGKST) and 136-139 (NKID).

This sequence belongs to the TRAFAC class translation factor GTPase superfamily. Classic translation factor GTPase family. LepA subfamily.

The protein resides in the cell inner membrane. The enzyme catalyses GTP + H2O = GDP + phosphate + H(+). In terms of biological role, required for accurate and efficient protein synthesis under certain stress conditions. May act as a fidelity factor of the translation reaction, by catalyzing a one-codon backward translocation of tRNAs on improperly translocated ribosomes. Back-translocation proceeds from a post-translocation (POST) complex to a pre-translocation (PRE) complex, thus giving elongation factor G a second chance to translocate the tRNAs correctly. Binds to ribosomes in a GTP-dependent manner. The protein is Elongation factor 4 of Synechococcus elongatus (strain ATCC 33912 / PCC 7942 / FACHB-805) (Anacystis nidulans R2).